The chain runs to 135 residues: ATP synthase epsilon chain (135 aa).

The protein belongs to the ATPase epsilon chain family. F-type ATPases have 2 components, CF(1) - the catalytic core - and CF(0) - the membrane proton channel. CF(1) has five subunits: alpha(3), beta(3), gamma(1), delta(1), epsilon(1). CF(0) has three main subunits: a, b and c.

It is found in the cell inner membrane. Functionally, produces ATP from ADP in the presence of a proton gradient across the membrane. In Brucella suis (strain ATCC 23445 / NCTC 10510), this protein is ATP synthase epsilon chain.